The primary structure comprises 157 residues: 2-C-methyl-D-erythritol 2,4-cyclodiphosphate synthase (157 aa).

A divalent metal cation contacts are provided by Asp-8 and His-10. 4-CDP-2-C-methyl-D-erythritol 2-phosphate is bound by residues 8 to 10 (DVH) and 34 to 35 (HS). His-42 is a binding site for a divalent metal cation. 4-CDP-2-C-methyl-D-erythritol 2-phosphate is bound by residues 56 to 58 (DIG), 132 to 135 (TTNE), and Arg-142.

It belongs to the IspF family. As to quaternary structure, homotrimer. It depends on a divalent metal cation as a cofactor.

It catalyses the reaction 4-CDP-2-C-methyl-D-erythritol 2-phosphate = 2-C-methyl-D-erythritol 2,4-cyclic diphosphate + CMP. It functions in the pathway isoprenoid biosynthesis; isopentenyl diphosphate biosynthesis via DXP pathway; isopentenyl diphosphate from 1-deoxy-D-xylulose 5-phosphate: step 4/6. In terms of biological role, involved in the biosynthesis of isopentenyl diphosphate (IPP) and dimethylallyl diphosphate (DMAPP), two major building blocks of isoprenoid compounds. Catalyzes the conversion of 4-diphosphocytidyl-2-C-methyl-D-erythritol 2-phosphate (CDP-ME2P) to 2-C-methyl-D-erythritol 2,4-cyclodiphosphate (ME-CPP) with a corresponding release of cytidine 5-monophosphate (CMP). This chain is 2-C-methyl-D-erythritol 2,4-cyclodiphosphate synthase, found in Prosthecochloris aestuarii (strain DSM 271 / SK 413).